Consider the following 1018-residue polypeptide: Fibronectin-binding protein A (1018 aa).

The N-terminal stretch at 1-36 (MKNNLRYGIRKHKLGAASVFLGTMIVVGMGQDKEAA) is a signal peptide. The short motif at 7-18 (YGIRKHKLGAAS) is the YSIRK-G/S signaling motif element. Residues 37–511 (ASEQKTTTVE…SNKANGNGKN (475 aa)) form a ligand-binding A region region. Disordered regions lie at residues 38 to 61 (SEQKTTTVEENGNSATDNKTSETQ) and 78 to 195 (ATVT…ETGT). Polar residues-rich tracts occupy residues 39-61 (EQKTTTVEENGNSATDNKTSETQ) and 78-92 (ATVTEQPSNATQVTT). Positions 112–126 (TVKEEVVKEEAKPQV) are enriched in basic and acidic residues. The span at 129–139 (TTQSQDNSGDQ) shows a compositional bias: polar residues. A fibrinogen/elastin/tropoelastin-binding region spans residues 194-511 (GTDVTSKVTV…SNKANGNGKN (318 aa)). The tract at residues 512-872 (GPIIQNNKFE…EGQQTIEEDT (361 aa)) is fibronectin-binding. The stretch at 545–574 (EEYDSSTLDIDYHTAIDGGGGYVDGYIETI) is one B-1 repeat. Residues 545-604 (EEYDSSTLDIDYHTAIDGGGGYVDGYIETIEETDSSAIDIDYHTAVDSEAGHVGGYTESS) form a 2 X approximate tandem repeats region. A B-2 repeat occupies 575–604 (EETDSSAIDIDYHTAVDSEAGHVGGYTESS). 3 disordered regions span residues 595-622 (GHVGGYTESSEESNPIDFEESTHENSKH), 740-813 (LGYE…DIDF), and 827-997 (EIIE…GMLF). One copy of the D-1 repeat lies at 745–782 (GQNSGNQSFEEDTEEDKPKYEQGGNIVDIDFDSVPQIH). The segment at 745 to 878 (GQNSGNQSFE…EEDTTPPIVP (134 aa)) is 4 X approximate tandem repeats. The D-2 repeat unit spans residues 783-820 (GQNKGNQSFEEDTEKDKPKYEHGGNIIDIDFDSVPHIH). One copy of the D-3 repeat lies at 821–859 (GFNKHTEIIEEDTNKDKPSYQFGGHNSVDFEEDTLPKVS). Over residues 827–838 (EIIEEDTNKDKP) the composition is skewed to basic and acidic residues. A D-4; truncated repeat occupies 860-878 (GQNEGQQTIEEDTTPPIVP). The segment covering 875-938 (PIVPPTPPTP…PAEPGKPVPP (64 aa)) has biased composition (pro residues). WR repeat units follow at residues 879-892 (PTPPTPEVPSEPET), 893-906 (PTPPTPEVPSEPET), 907-920 (PTPPTPEVPSEPET), 921-934 (PTPPTPEVPAEPGK), and 935-948 (PVPPAKEEPKKPSK). The segment at 879–948 (PTPPTPEVPS…AKEEPKKPSK (70 aa)) is 5 X tandem repeats, Pro-rich (WR). The short motif at 982 to 986 (LPETG) is the LPXTG sorting signal element. Thr-985 is subject to Pentaglycyl murein peptidoglycan amidated threonine. The propeptide at 986–1018 (GGEESTNKGMLFGGLFSILGLALLRRNKKNHKA) is removed by sortase.

The protein localises to the secreted. It localises to the cell wall. Promotes bacterial attachment to multiple substrates, such as fibronectin (Fn), fibrinogen (Fg), elastin peptides and tropoelastin. This confers to S.aureus the ability to invade endothelial cells. Promotes adherence to and aggregation of activated platelets. The chain is Fibronectin-binding protein A from Staphylococcus aureus (strain USA300).